A 199-amino-acid chain; its full sequence is 7-methyl-GTP pyrophosphatase (199 aa).

The active-site Proton acceptor is the D76.

Belongs to the Maf family. YceF subfamily. Requires a divalent metal cation as cofactor.

It is found in the cytoplasm. It carries out the reaction N(7)-methyl-GTP + H2O = N(7)-methyl-GMP + diphosphate + H(+). Functionally, nucleoside triphosphate pyrophosphatase that hydrolyzes 7-methyl-GTP (m(7)GTP). May have a dual role in cell division arrest and in preventing the incorporation of modified nucleotides into cellular nucleic acids. The chain is 7-methyl-GTP pyrophosphatase from Rhizobium etli (strain ATCC 51251 / DSM 11541 / JCM 21823 / NBRC 15573 / CFN 42).